The chain runs to 318 residues: Thymidylate synthase (318 aa).

Residues Arg25 and 180 to 181 (RR) contribute to the dUMP site. Cys200 acts as the Nucleophile in catalysis. Residues 220 to 223 (RSAD), Asn231, and 261 to 263 (HIY) contribute to the dUMP site. Asp223 is a binding site for (6R)-5,10-methylene-5,6,7,8-tetrahydrofolate. Residue Ala317 participates in (6R)-5,10-methylene-5,6,7,8-tetrahydrofolate binding.

This sequence belongs to the thymidylate synthase family. Bacterial-type ThyA subfamily. As to quaternary structure, homodimer.

It is found in the cytoplasm. It catalyses the reaction dUMP + (6R)-5,10-methylene-5,6,7,8-tetrahydrofolate = 7,8-dihydrofolate + dTMP. It functions in the pathway pyrimidine metabolism; dTTP biosynthesis. Its function is as follows. Catalyzes the reductive methylation of 2'-deoxyuridine-5'-monophosphate (dUMP) to 2'-deoxythymidine-5'-monophosphate (dTMP) while utilizing 5,10-methylenetetrahydrofolate (mTHF) as the methyl donor and reductant in the reaction, yielding dihydrofolate (DHF) as a by-product. This enzymatic reaction provides an intracellular de novo source of dTMP, an essential precursor for DNA biosynthesis. The sequence is that of Thymidylate synthase from Ligilactobacillus salivarius (strain UCC118) (Lactobacillus salivarius).